A 142-amino-acid chain; its full sequence is MEITNVNHICFSVSDLNTSIQFYKDILHGDLLVSGRTTAYLTIGHTWIALNQEKNIPRNEISHSYTHVAFSIDEEDFQQWIQWLKENQVNILKGRPRDIKDKKSIYFTDLDGHKIELHTGTLKDRMEYYKCEKTHMQFYDEF.

The 116-residue stretch at 5–120 folds into the VOC domain; the sequence is NVNHICFSVS…DGHKIELHTG (116 aa). Residues His-8, His-67, and Glu-116 each contribute to the Mg(2+) site. Glu-116 (proton donor/acceptor) is an active-site residue.

This sequence belongs to the fosfomycin resistance protein family. FosB subfamily. As to quaternary structure, homodimer. The cofactor is Mg(2+).

It is found in the cytoplasm. In terms of biological role, metallothiol transferase which confers resistance to fosfomycin by catalyzing the addition of a thiol cofactor to fosfomycin. L-cysteine is probably the physiological thiol donor. In Staphylococcus epidermidis (strain ATCC 35984 / DSM 28319 / BCRC 17069 / CCUG 31568 / BM 3577 / RP62A), this protein is Metallothiol transferase FosB.